The following is a 59-amino-acid chain: Light-harvesting protein B-800-850 alpha chain A (59 aa).

The Cytoplasmic portion of the chain corresponds to 1-11; sequence MNQARIWTVVK. A helical membrane pass occupies residues 12-35; it reads PTVGLPLLLGSVTVIAILVHFAVL. Residue His-31 coordinates a bacteriochlorophyll. The Periplasmic segment spans residues 36–59; it reads SHTTWFSKYWNGKAAAIESSVNVG.

It belongs to the antenna complex alpha subunit family. The core complex is formed by different alpha and beta chains, binding bacteriochlorophyll molecules, and arranged most probably in tetrameric structures disposed around the reaction center. The non-pigmented gamma chains may constitute additional components.

Its subcellular location is the cell inner membrane. In terms of biological role, antenna complexes are light-harvesting systems, which transfer the excitation energy to the reaction centers. The sequence is that of Light-harvesting protein B-800-850 alpha chain A (pucAA) from Rhodopseudomonas palustris (strain ATCC BAA-98 / CGA009).